The primary structure comprises 62 residues: UPF0434 protein FTL_1400 (62 aa).

This sequence belongs to the UPF0434 family.

The protein is UPF0434 protein FTL_1400 of Francisella tularensis subsp. holarctica (strain LVS).